A 159-amino-acid polypeptide reads, in one-letter code: Nucleotide-binding protein PST_3153 (159 aa).

Belongs to the YajQ family.

Its function is as follows. Nucleotide-binding protein. The sequence is that of Nucleotide-binding protein PST_3153 from Stutzerimonas stutzeri (strain A1501) (Pseudomonas stutzeri).